Here is a 178-residue protein sequence, read N- to C-terminus: Large ribosomal subunit protein uL6 (178 aa).

This sequence belongs to the universal ribosomal protein uL6 family. As to quaternary structure, part of the 50S ribosomal subunit.

In terms of biological role, this protein binds to the 23S rRNA, and is important in its secondary structure. It is located near the subunit interface in the base of the L7/L12 stalk, and near the tRNA binding site of the peptidyltransferase center. This is Large ribosomal subunit protein uL6 from Francisella philomiragia subsp. philomiragia (strain ATCC 25017 / CCUG 19701 / FSC 153 / O#319-036).